The following is a 322-amino-acid chain: AB hydrolase superfamily protein FGSG_00044 (322 aa).

In terms of domain architecture, AB hydrolase-1 spans 36 to 319 (RTTPKQPVAI…ITAEVRRIVK (284 aa)).

The protein belongs to the AB hydrolase superfamily.

It functions in the pathway mycotoxin biosynthesis. Functionally, AB hydrolase superfamily protein; part of the gene cluster that mediates the biosynthesis of gramillins A and B, bicyclic lipopeptides that induce cell death in maize leaves but not in wheat leaves. The nonribosomal peptide synthetase GRA1 incorporates respectively a glutamic adic (Glu), a leucine (Leu), a serine (Ser), a hydroxyglutamine (HOGln), a 2-amino decanoic acid, and 2 cysteins (CysB and CysA). The biosynthesis of 2-amino decanoic acid incorporated in gramillins could be initiated by a fatty acid synthase composed of the alpha and beta subunits FGSG_00036 and FGSG_11656. The cytochrome P450 monooxygenase FGSG_15680 could hydroxylate the fatty acid chain. Subsequent oxidation to the ketone by the oxidoreductase FGSG_00048 and transamination by aminotransferase FGSG_00049 could form 2-amino-decanoic acid. On the other hand, FGSG_15680 could also be responsible for the HO-modified glutamine at the gamma-position. Whether hydroxylation occurs on the fully assembled product or on the Gln residue prior to assembly into the gramillins requires further proof. The thioredoxin FGSG_00043 could also be required for the disulfide-bond formation between CysA and CysB. The specific involvement of the remaining proteins from the cluster is more difficult to discern, but could have broader regulatory (FGSG_00040 and FGSG_11657) or enzymatic functions (FGSG_00044 and FGSG_00045). The final C-domain of GRA1 does not possess the expected sequence of a termination CT domain, often implicated in macrocyclization and release of a cyclopeptidein fungal NRPs; and the thioesterase FGSG_00047 may act in concert with the terminal C-domain of GRA1 to catalyze the formation of the macrocyclic anhydride and release of the products. The protein is AB hydrolase superfamily protein FGSG_00044 of Gibberella zeae (strain ATCC MYA-4620 / CBS 123657 / FGSC 9075 / NRRL 31084 / PH-1) (Wheat head blight fungus).